A 402-amino-acid chain; its full sequence is Tryptophan synthase beta chain (402 aa).

Lysine 91 carries the post-translational modification N6-(pyridoxal phosphate)lysine.

Belongs to the TrpB family. Tetramer of two alpha and two beta chains. Pyridoxal 5'-phosphate is required as a cofactor.

It catalyses the reaction (1S,2R)-1-C-(indol-3-yl)glycerol 3-phosphate + L-serine = D-glyceraldehyde 3-phosphate + L-tryptophan + H2O. It participates in amino-acid biosynthesis; L-tryptophan biosynthesis; L-tryptophan from chorismate: step 5/5. The beta subunit is responsible for the synthesis of L-tryptophan from indole and L-serine. In Streptococcus thermophilus (strain CNRZ 1066), this protein is Tryptophan synthase beta chain.